We begin with the raw amino-acid sequence, 400 residues long: Snake venom metalloproteinase H3 (400 aa).

An N-terminal signal peptide occupies residues 1-6 (FPYQGS). Positions 7-176 (SIILESGNVN…KKASQLIVST (170 aa)) are excised as a propeptide. Residues 180 to 377 (KYMEIVIVVD…ENPPCILNKP (198 aa)) enclose the Peptidase M12B domain. 2 residues coordinate Ca(2+): glutamate 183 and aspartate 267. Disulfide bonds link cysteine 291-cysteine 372, cysteine 331-cysteine 356, and cysteine 333-cysteine 339. Residue histidine 316 participates in Zn(2+) binding. Residue glutamate 317 is part of the active site. Residues histidine 320 and histidine 326 each contribute to the Zn(2+) site. Ca(2+) contacts are provided by cysteine 372, asparagine 375, valine 387, asparagine 390, leucine 392, glutamate 394, and aspartate 400. Residues 378 to 400 (LRTDTVSTPVSGNELLEAGKDYD) constitute a propeptide that is removed on maturation.

It belongs to the venom metalloproteinase (M12B) family. P-I subfamily. As to quaternary structure, monomer. Zn(2+) serves as cofactor. As to expression, expressed by the venom gland.

The protein resides in the secreted. Its function is as follows. Snake venom metalloproteinase that impairs hemostasis in the envenomed animal. The chain is Snake venom metalloproteinase H3 from Deinagkistrodon acutus (Hundred-pace snake).